Here is a 147-residue protein sequence, read N- to C-terminus: Deoxyuridine 5'-triphosphate nucleotidohydrolase (147 aa).

Residue Arg24 participates in Mg(2+) binding. Residues 68–70 (PRS), 82–85 (GVID), Tyr88, Gly93, Ile95, and Arg111 contribute to the dUTP site.

Belongs to the dUTPase family. The cofactor is Mg(2+).

The enzyme catalyses dUTP + H2O = dUMP + diphosphate + H(+). In terms of biological role, this enzyme is involved in nucleotide metabolism: it produces dUMP, the immediate precursor of thymidine nucleotides and it decreases the intracellular concentration of dUTP so that uracil cannot be incorporated into DNA. In Homo sapiens (Human), this protein is Deoxyuridine 5'-triphosphate nucleotidohydrolase (OPG046).